The sequence spans 381 residues: Homoserine O-succinyltransferase (381 aa).

In terms of domain architecture, AB hydrolase-1 spans 45-360; that stretch reads NAVLVCHALN…PHGHDAFLLD (316 aa). Ser-151 serves as the catalytic Nucleophile. Arg-221 contributes to the substrate binding site. Catalysis depends on residues Asp-321 and His-354. Asp-355 contributes to the substrate binding site.

The protein belongs to the AB hydrolase superfamily. MetX family. As to quaternary structure, homodimer.

The protein resides in the cytoplasm. It carries out the reaction L-homoserine + succinyl-CoA = O-succinyl-L-homoserine + CoA. It participates in amino-acid biosynthesis; L-methionine biosynthesis via de novo pathway; O-succinyl-L-homoserine from L-homoserine: step 1/1. Transfers a succinyl group from succinyl-CoA to L-homoserine, forming succinyl-L-homoserine. This Burkholderia cenocepacia (strain HI2424) protein is Homoserine O-succinyltransferase.